Here is a 222-residue protein sequence, read N- to C-terminus: Phosphatidylinositol phosphate synthase (222 aa).

Residue D31–T34 coordinates a CDP-1,2-diacyl-sn-glycerol. Helical transmembrane passes span I32–F49 and W55–M74. Positions 68 and 71 each coordinate Mg(2+). A CDP-1,2-diacyl-sn-glycerol contacts are provided by G72, R76, and T82. Positions 89 and 93 each coordinate Mg(2+). D93 serves as the catalytic Proton acceptor. The next 4 helical transmembrane spans lie at L95–L112, V118–A136, L156–L173, and V179–V196.

The protein belongs to the CDP-alcohol phosphatidyltransferase class-I family. As to quaternary structure, homodimer. Mg(2+) serves as cofactor.

Its subcellular location is the cell membrane. It localises to the secreted. The protein localises to the cell wall. The catalysed reaction is a CDP-1,2-diacyl-sn-glycerol + 1D-myo-inositol 3-phosphate = a 1,2-diacyl-sn-glycero-3-phospho-(1D-myo-inositol-3-phosphate) + CMP + H(+). The enzyme catalyses 1,2-di-(9Z-octadecenoyl)-sn-glycero-3-cytidine-5'-diphosphate + 1D-myo-inositol 3-phosphate = 1,2-di-(9Z-octadecenoyl)-sn-glycero-3-phospho-(1D-myo-inositol-3-phosphate) + CMP + H(+). It carries out the reaction 1,2-dihexadecanoyl-sn-glycero-3-CDP + 1D-myo-inositol 3-phosphate = 1,2-dihexadecanoyl-sn-glycero-3-phospho-(1D-myo-inositol-3-phosphate) + CMP + H(+). Its pathway is phospholipid metabolism; phosphatidylinositol phosphate biosynthesis. Competitively inhibited by several inositol 1-phosphate analogs, including the phosphonate analog 1-deoxy-1-phosphonomethyl-myo-inositol (Ino-C-P). This leads to inhibition of M.smegmatis growth. Functionally, catalyzes the conjugation of the 1'-hydroxyl group of D-myo-inositol-3-phosphate (also named L-myo-inositol-1-phosphate) with a lipid tail of cytidine diphosphate diacylglycerol (CDP-DAG), forming phosphatidylinositol phosphate (PIP) and CMP. PIP is a precursor of phosphatidylinositol (PI) which is an essential lipid for mycobacteria required for formation of their cell wall. Is essential to the survival of M.smegmatis. This Mycolicibacterium smegmatis (strain ATCC 700084 / mc(2)155) (Mycobacterium smegmatis) protein is Phosphatidylinositol phosphate synthase.